Here is a 299-residue protein sequence, read N- to C-terminus: UDP-N-acetylenolpyruvoylglucosamine reductase (299 aa).

Residues 28–193 (KVGGPADILA…LSAKFELQAG (166 aa)) enclose the FAD-binding PCMH-type domain. Arg172 is a catalytic residue. The Proton donor role is filled by Ser222. Residue Glu292 is part of the active site.

It depends on FAD as a cofactor.

The protein resides in the cytoplasm. It catalyses the reaction UDP-N-acetyl-alpha-D-muramate + NADP(+) = UDP-N-acetyl-3-O-(1-carboxyvinyl)-alpha-D-glucosamine + NADPH + H(+). The protein operates within cell wall biogenesis; peptidoglycan biosynthesis. In terms of biological role, cell wall formation. This Lactococcus lactis subsp. cremoris (strain MG1363) protein is UDP-N-acetylenolpyruvoylglucosamine reductase.